The following is a 71-amino-acid chain: Delta-actitoxin-Avd2b 2 (71 aa).

A signal peptide spans 1–20; sequence MNRLLVFLMLGAAFMLVVSA. A propeptide spanning residues 21–41 is cleaved from the precursor; sequence NDAYGDEPAFKDLNQGDESLG. Disulfide bonds link C46–C61, C47–C55, and C49–C66.

Belongs to the sea anemone short toxin (type III) family.

The protein resides in the secreted. Its subcellular location is the nematocyst. Functionally, voltage-gated sodium channel (Nav) inhibitor. 1 uM completely inhibits insect voltage-gated sodium channel inactivation (DmNav1 from D.melanogaster). This chain is Delta-actitoxin-Avd2b 2, found in Anemonia viridis (Snakelocks anemone).